The primary structure comprises 446 residues: Probable D-serine dehydratase (446 aa).

Residue lysine 116 is modified to N6-(pyridoxal phosphate)lysine.

It belongs to the serine/threonine dehydratase family. DsdA subfamily. It depends on pyridoxal 5'-phosphate as a cofactor.

The enzyme catalyses D-serine = pyruvate + NH4(+). The protein is Probable D-serine dehydratase of Bacillus cereus (strain 03BB102).